A 211-amino-acid polypeptide reads, in one-letter code: Outer-membrane lipoprotein carrier protein (211 aa).

Positions 1 to 24 (MRNRILVSACAALAMFAMQAPAHA) are cleaved as a signal peptide.

Belongs to the LolA family. In terms of assembly, monomer.

The protein resides in the periplasm. In terms of biological role, participates in the translocation of lipoproteins from the inner membrane to the outer membrane. Only forms a complex with a lipoprotein if the residue after the N-terminal Cys is not an aspartate (The Asp acts as a targeting signal to indicate that the lipoprotein should stay in the inner membrane). In Cupriavidus taiwanensis (strain DSM 17343 / BCRC 17206 / CCUG 44338 / CIP 107171 / LMG 19424 / R1) (Ralstonia taiwanensis (strain LMG 19424)), this protein is Outer-membrane lipoprotein carrier protein.